Reading from the N-terminus, the 178-residue chain is dCTP deaminase (178 aa).

Residues 99–104 (RSTWAR) and aspartate 115 each bind dCTP. Glutamate 125 serves as the catalytic Proton donor/acceptor. Residues tyrosine 157 and glutamine 164 each coordinate dCTP.

Belongs to the dCTP deaminase family. In terms of assembly, homotrimer.

The enzyme catalyses dCTP + H2O + H(+) = dUTP + NH4(+). Its pathway is pyrimidine metabolism; dUMP biosynthesis; dUMP from dCTP (dUTP route): step 1/2. Functionally, catalyzes the deamination of dCTP to dUTP. This chain is dCTP deaminase, found in Aeropyrum pernix (strain ATCC 700893 / DSM 11879 / JCM 9820 / NBRC 100138 / K1).